Reading from the N-terminus, the 588-residue chain is Aspartate--tRNA(Asp/Asn) ligase (588 aa).

Glutamate 172 is an L-aspartate binding site. Residues 196–199 are aspartate; the sequence is QLFK. Arginine 218 lines the L-aspartate pocket. ATP-binding positions include 218–220 and glutamine 227; that span reads RDE. Residue histidine 450 coordinates L-aspartate. Position 484 (glutamate 484) interacts with ATP. Arginine 491 is a binding site for L-aspartate. 536–539 serves as a coordination point for ATP; sequence GLDR.

The protein belongs to the class-II aminoacyl-tRNA synthetase family. Type 1 subfamily. As to quaternary structure, homodimer.

Its subcellular location is the cytoplasm. The catalysed reaction is tRNA(Asx) + L-aspartate + ATP = L-aspartyl-tRNA(Asx) + AMP + diphosphate. Functionally, aspartyl-tRNA synthetase with relaxed tRNA specificity since it is able to aspartylate not only its cognate tRNA(Asp) but also tRNA(Asn). Reaction proceeds in two steps: L-aspartate is first activated by ATP to form Asp-AMP and then transferred to the acceptor end of tRNA(Asp/Asn). The polypeptide is Aspartate--tRNA(Asp/Asn) ligase (Nitrosospira multiformis (strain ATCC 25196 / NCIMB 11849 / C 71)).